The primary structure comprises 301 residues: Helicase VP6-A (301 aa).

2 disordered regions span residues Met1–Thr99 and Arg163–Gly208. Composition is skewed to basic and acidic residues over residues Glu8–Glu30, Gly37–Val55, and Gly67–Gly81. An ATP-binding site is contributed by Lys82. Basic and acidic residues-rich tracts occupy residues Arg163–Lys177 and Val186–Glu202.

Belongs to the orbivirus VP6 family. In terms of assembly, homohexamer.

Its subcellular location is the virion. It catalyses the reaction ATP + H2O = ADP + phosphate + H(+). Its function is as follows. ATP dependent RNA helicase essential for RNA packaging and viral transcription. Possesses ss- and dsRNA-binding capacity. The protein is Helicase VP6-A (Segment-9) of Bluetongue virus 2 (isolate USA) (BTV 2).